We begin with the raw amino-acid sequence, 488 residues long: Bifunctional protein HldE (488 aa).

Residues 1–332 form a ribokinase region; sequence MRESFLDTIQ…QELQSQQSAA (332 aa). 208–211 contributes to the ATP binding site; it reads NKRE. Asp-277 is an active-site residue. The cytidylyltransferase stretch occupies residues 359–488; that stretch reads FTNGCFDLLH…TSNIIRKLAS (130 aa).

The protein in the N-terminal section; belongs to the carbohydrate kinase PfkB family. This sequence in the C-terminal section; belongs to the cytidylyltransferase family. As to quaternary structure, homodimer.

The enzyme catalyses D-glycero-beta-D-manno-heptose 7-phosphate + ATP = D-glycero-beta-D-manno-heptose 1,7-bisphosphate + ADP + H(+). It catalyses the reaction D-glycero-beta-D-manno-heptose 1-phosphate + ATP + H(+) = ADP-D-glycero-beta-D-manno-heptose + diphosphate. The protein operates within nucleotide-sugar biosynthesis; ADP-L-glycero-beta-D-manno-heptose biosynthesis; ADP-L-glycero-beta-D-manno-heptose from D-glycero-beta-D-manno-heptose 7-phosphate: step 1/4. It functions in the pathway nucleotide-sugar biosynthesis; ADP-L-glycero-beta-D-manno-heptose biosynthesis; ADP-L-glycero-beta-D-manno-heptose from D-glycero-beta-D-manno-heptose 7-phosphate: step 3/4. Its function is as follows. Catalyzes the phosphorylation of D-glycero-D-manno-heptose 7-phosphate at the C-1 position to selectively form D-glycero-beta-D-manno-heptose-1,7-bisphosphate. In terms of biological role, catalyzes the ADP transfer from ATP to D-glycero-beta-D-manno-heptose 1-phosphate, yielding ADP-D-glycero-beta-D-manno-heptose. This is Bifunctional protein HldE from Methylobacillus flagellatus (strain ATCC 51484 / DSM 6875 / VKM B-1610 / KT).